Reading from the N-terminus, the 177-residue chain is ADP-ribosylation factor-like protein 3 (177 aa).

A lipid anchor (N-myristoyl glycine) is attached at Gly-2. Residues 23–31, 125–128, and Ala-159 each bind GTP; these read GLDNAGKTT and NKQD.

It belongs to the small GTPase superfamily. Arf family.

Its subcellular location is the golgi apparatus membrane. The protein resides in the cytoplasm. It is found in the cytoskeleton. The protein localises to the spindle. It localises to the nucleus. Its subcellular location is the microtubule organizing center. In terms of biological role, small GTP-binding protein which cycles between an inactive GDP-bound and an active GTP-bound form, and the rate of cycling is regulated by guanine nucleotide exchange factors (GEF) and GTPase-activating proteins (GAP). Required for normal cytokinesis and cilia signaling. Required for targeting proteins to the ciliary membrane by releasing myristoylated protein from unc119 cargo adapters into the cilium. The polypeptide is ADP-ribosylation factor-like protein 3 (Chlamydomonas reinhardtii (Chlamydomonas smithii)).